The following is a 297-amino-acid chain: MGMDRIADRAIIDGKRFAAGLLDDITARVKKLEEETGQVPGLAVVLVGEDPASRVYVGSKHRQTLAAGIASFKYELPAETTQEELMALIDRLNVDPAVHGILVQLPLPAHLDANAVIQEINPNKDVDGFHISNAGRLATGQPAFVPCTPLGCLLLLKDRLGANLSGLHAVVLGKSNIVGRPMVQLLLAESCTVTIAHSRTRNAPELCREADILIVAVGRPGLVRGDWIKPGAVVIDVGINRVEAEGKSRIVGDVAFEEAGHAGAITPVPGGVGPMTIACLLSNTLTAFCRQHAVNID.

NADP(+)-binding positions include 173–175 (GKS), serine 198, and isoleucine 239.

Belongs to the tetrahydrofolate dehydrogenase/cyclohydrolase family. Homodimer.

The enzyme catalyses (6R)-5,10-methylene-5,6,7,8-tetrahydrofolate + NADP(+) = (6R)-5,10-methenyltetrahydrofolate + NADPH. It catalyses the reaction (6R)-5,10-methenyltetrahydrofolate + H2O = (6R)-10-formyltetrahydrofolate + H(+). It functions in the pathway one-carbon metabolism; tetrahydrofolate interconversion. Catalyzes the oxidation of 5,10-methylenetetrahydrofolate to 5,10-methenyltetrahydrofolate and then the hydrolysis of 5,10-methenyltetrahydrofolate to 10-formyltetrahydrofolate. In Sinorhizobium medicae (strain WSM419) (Ensifer medicae), this protein is Bifunctional protein FolD 2.